The chain runs to 681 residues: Peroxisomal acyl-coenzyme A oxidase 2 (681 aa).

2 positions are modified to phosphoserine: Ser-3 and Ser-9. A Phosphothreonine modification is found at Thr-13. 4 positions are modified to N6-succinyllysine: Lys-66, Lys-137, Lys-453, and Lys-561. A Microbody targeting signal motif is present at residues Ser-679–Leu-681.

This sequence belongs to the acyl-CoA oxidase family. Homodimer. Requires FAD as cofactor. As to expression, present in all tissues tested: heart, brain, placenta, lung, liver, skeletal muscle, kidney and pancreas. Most abundant in heart, liver and kidney.

Its subcellular location is the peroxisome. The enzyme catalyses (25R)-3alpha,7alpha,12alpha-trihydroxy-5beta-cholestan-26-oyl-CoA + A + H2O = (24R,25R)-3alpha,7alpha,12alpha,24-tetrahydroxy-5beta-cholestan-26-oyl-CoA + AH2. It carries out the reaction (25S)-3alpha,7alpha,12alpha-trihydroxy-5beta-cholestan-26-oyl-CoA + O2 = (24E)-3alpha,7alpha,12alpha-trihydroxy-5beta-cholest-24-en-26-oyl-CoA + H2O2. In terms of biological role, oxidizes the CoA esters of the bile acid intermediates di- and tri-hydroxycholestanoic acids. Capable of oxidizing short as well as long chain 2-methyl branched fatty acids. The protein is Peroxisomal acyl-coenzyme A oxidase 2 of Homo sapiens (Human).